Consider the following 260-residue polypeptide: Triosephosphate isomerase (260 aa).

11–13 (NWK) serves as a coordination point for substrate. The active-site Electrophile is His-103. The active-site Proton acceptor is the Glu-175. Substrate is bound by residues Gly-181, Ser-220, and 241–242 (GG).

This sequence belongs to the triosephosphate isomerase family. In terms of assembly, homodimer.

It localises to the cytoplasm. It catalyses the reaction D-glyceraldehyde 3-phosphate = dihydroxyacetone phosphate. Its pathway is carbohydrate biosynthesis; gluconeogenesis. It functions in the pathway carbohydrate degradation; glycolysis; D-glyceraldehyde 3-phosphate from glycerone phosphate: step 1/1. Its function is as follows. Involved in the gluconeogenesis. Catalyzes stereospecifically the conversion of dihydroxyacetone phosphate (DHAP) to D-glyceraldehyde-3-phosphate (G3P). In Shewanella sp. (strain MR-7), this protein is Triosephosphate isomerase.